Consider the following 109-residue polypeptide: Nucleoid-associated protein VIBHAR_03086 (109 aa).

Disordered regions lie at residues 1–21 (MFGK…QDRM) and 88–109 (QKEK…KMPF).

The protein belongs to the YbaB/EbfC family. As to quaternary structure, homodimer.

The protein resides in the cytoplasm. The protein localises to the nucleoid. Binds to DNA and alters its conformation. May be involved in regulation of gene expression, nucleoid organization and DNA protection. The protein is Nucleoid-associated protein VIBHAR_03086 of Vibrio campbellii (strain ATCC BAA-1116).